The chain runs to 482 residues: O-methyltransferase tpcA (482 aa).

S-adenosyl-L-methionine contacts are provided by residues 293–294 (GG), Asp316, 348–349 (SF), and Arg364. The active-site Proton acceptor is His368.

This sequence belongs to the class I-like SAM-binding methyltransferase superfamily. Cation-independent O-methyltransferase family. As to expression, specifically expressed in conidia.

It participates in secondary metabolite biosynthesis. In terms of biological role, O-methyltransferase; part of the gene cluster that mediates the biosynthesis of trypacidin, a mycotoxin with antiprotozoal activity and that plays a role in the infection process. The pathway begins with the synthesis of atrochrysone thioester by the polyketide synthase (PKS) tpcC. The atrochrysone carboxyl ACP thioesterase tpcB then breaks the thioester bond and releases the atrochrysone carboxylic acid from tpcC. The decarboxylase tpcK converts atrochrysone carboxylic acid to atrochrysone which is further reduced into emodin anthrone. The next step is performed by the emodin anthrone oxygenase tpcL that catalyzes the oxidation of emodinanthrone to emodin. Emodin O-methyltransferase encoded by tpcA catalyzes methylation of the 8-hydroxy group of emodin to form questin. Ring cleavage of questin by questin oxidase tpcI leads to desmethylsulochrin via several intermediates including questin epoxide. Another methylation step catalyzed by tpcM leads to the formation of sulochrin which is further converted to monomethylsulfochrin by tpcH. Finally, the tpcJ catalyzes the conversion of monomethylsulfochrin to trypacidin. Trypacidin is toxic for human pulmonary and bronchial epithelial cells by initiating the intracellular formation of nitric oxide (NO) and hydrogen peroxide (H(2)O(2)), thus triggering host necrotic cell death. The trypacidin pathway is also able to produce endocrocin via a distinct route from the endocrocin Enc pathway. The polypeptide is O-methyltransferase tpcA (Aspergillus fumigatus (strain ATCC MYA-4609 / CBS 101355 / FGSC A1100 / Af293) (Neosartorya fumigata)).